The sequence spans 296 residues: MRIFLSAIYWNHSKFLWNSENWPIKVPWYGLCFSLGILFASLLGIYLAKSSYNSEDEKNFSKEQLSGALENFALYSLLFIIPGSRIAYILFYGGDFYFKHPREILKVWNGGLASHGGMLGLILWALIFSWRYRKKISVLTFLFLCDLCASVFGCAAFMIRIGNFMNQEIVGKPTSLPWGIIFSSPAQGVLGVPVHPVQLYEGMSYLLLSIILFFLSYKRYFRLGSGWVTSLGLVGISLIRFFAEFFKSHQGKVIGPNSPLTMGQILSFPLFVFGLCLGIACFLKNKKKRSPTSSVK.

A run of 4 helical transmembrane segments spans residues 28-48 (WYGL…IYLA), 72-92 (FALY…ILFY), 110-130 (GGLA…IFSW), and 139-159 (LTFL…AFMI). An a 1,2-diacyl-sn-glycero-3-phospho-(1'-sn-glycerol)-binding site is contributed by Arg160. 3 consecutive transmembrane segments (helical) span residues 197 to 217 (VQLY…FLSY), 226 to 246 (GWVT…AEFF), and 263 to 283 (GQIL…ACFL).

Belongs to the Lgt family.

It localises to the cell inner membrane. It catalyses the reaction L-cysteinyl-[prolipoprotein] + a 1,2-diacyl-sn-glycero-3-phospho-(1'-sn-glycerol) = an S-1,2-diacyl-sn-glyceryl-L-cysteinyl-[prolipoprotein] + sn-glycerol 1-phosphate + H(+). It participates in protein modification; lipoprotein biosynthesis (diacylglyceryl transfer). Its function is as follows. Catalyzes the transfer of the diacylglyceryl group from phosphatidylglycerol to the sulfhydryl group of the N-terminal cysteine of a prolipoprotein, the first step in the formation of mature lipoproteins. This is Phosphatidylglycerol--prolipoprotein diacylglyceryl transferase from Chlamydia caviae (strain ATCC VR-813 / DSM 19441 / 03DC25 / GPIC) (Chlamydophila caviae).